Here is a 593-residue protein sequence, read N- to C-terminus: RNA-binding protein 47 (593 aa).

Positions 1–20 (MTAEDSTAAMSSDSAAGSSA) are enriched in low complexity. The disordered stretch occupies residues 1-25 (MTAEDSTAAMSSDSAAGSSAKVPEG). RRM domains lie at 71-149 (CEVF…CSVD), 151-233 (CRLF…WAEP), and 246-318 (KILY…LAKP). Arg-332 carries the omega-N-methylarginine modification. Asymmetric dimethylarginine; alternate occurs at positions 394 and 405. Residues Arg-394 and Arg-405 each carry the omega-N-methylarginine; alternate modification.

Belongs to the RRM RBM47 family. As to quaternary structure, homodimer. Interacts with A1CF. Interacts with APOBEC1; form an mRNA editing complex. Interacts with RBPMS.

The protein resides in the nucleus. It is found in the cytoplasm. Its function is as follows. Single-stranded RNA-binding protein that functions in a variety of RNA processes, including alternative splicing, RNA stabilization, and RNA editing. Functions as an enzyme-substrate adapter for the cytidine deaminase APOBEC1. With APOBEC1 forms an mRNA editing complex involved into cytidine to uridine editing of a variety of mRNA molecules. Through the binding of their 3'UTR, also stabilizes a variety of mRNAs and regulates the expression of genes such as the interferon alpha/beta receptor and interleukin-10. Also involved in the alternative splicing of several genes including TJP1. Binds the pre-mRNA (U)GCAUG consensus sequences in downstream intronic regions of alternative exons, regulating their exclusion and inclusion into mRNAs. Independently of its RNA-binding activity, could negatively regulate MAVS by promoting its lysosomal degradation. The protein is RNA-binding protein 47 of Homo sapiens (Human).